We begin with the raw amino-acid sequence, 139 residues long: Cofilin (139 aa).

Positions 4–135 (GVKVSQECLD…SYDTVLDKVS (132 aa)) constitute an ADF-H domain.

This sequence belongs to the actin-binding proteins ADF family.

The protein resides in the cytoplasm. The protein localises to the cytoskeleton. It localises to the nucleus matrix. Controls reversibly actin polymerization and depolymerization in a pH-sensitive manner. It has the ability to bind G- and F-actin in a 1:1 ratio of cofilin to actin. Binding to F-actin is regulated by tropomyosin. It is the major component of intranuclear and cytoplasmic actin rods. Required for accumulation of actin at the cell division site via depolymerizing actin at the cell ends. In association with myosin II has a role in the assembly of the contractile ring via severing actin filaments. Involved in the maintenance of the contractile ring once formed. In association with profilin and capping protein, has a role in the mitotic reorganization of the actin cytoskeleton. This chain is Cofilin (COF1), found in Mycosarcoma maydis (Corn smut fungus).